The sequence spans 345 residues: Ferrochelatase (345 aa).

Fe cation-binding residues include H215 and E296.

Belongs to the ferrochelatase family.

The protein localises to the cytoplasm. It carries out the reaction heme b + 2 H(+) = protoporphyrin IX + Fe(2+). It participates in porphyrin-containing compound metabolism; protoheme biosynthesis; protoheme from protoporphyrin-IX: step 1/1. Functionally, catalyzes the ferrous insertion into protoporphyrin IX. The sequence is that of Ferrochelatase from Nitrobacter hamburgensis (strain DSM 10229 / NCIMB 13809 / X14).